The following is a 400-amino-acid chain: UDP-glucuronate:glycolipid 2-beta-glucuronosyltransferase (400 aa).

Aspartate 157 acts as the Proton acceptor in catalysis. UDP-alpha-D-glucuronate contacts are provided by residues serine 230 to methionine 231, glutamate 272 to methionine 273, tyrosine 292, and methionine 306 to glutamine 310. The segment at proline 377–histidine 400 is disordered. The span at proline 390–histidine 400 shows a compositional bias: polar residues.

It belongs to the glycosyltransferase 70 family.

The protein localises to the cell inner membrane. It catalyses the reaction alpha-D-Man-(1-&gt;3)-beta-D-Glc-(1-&gt;4)-alpha-D-Glc-1-di-trans,octa-cis-undecaprenyl diphosphate + UDP-alpha-D-glucuronate = beta-D-GlcA-(1-&gt;2)-alpha-D-Man-(1-&gt;3)-beta-D-Glc-(1-&gt;4)-alpha-D-Glc-di-trans,octa-cis-undecaprenyl diphosphate + UDP + H(+). It participates in glycan biosynthesis; xanthan biosynthesis. Functionally, catalyzes the transfer of a glucuronic acid (GlcA) residue from UDP-glucuronate to mannose-alpha-1,3-glucose-beta-1,4-glucose-P-P-polyisoprenyl to form the lipid-linked tetrasaccharide GlcA-Man-Glc(2)-PP-Pol, with a glucuronic acid-beta-mannose linkage. Is involved in the biosynthesis of the exopolysaccharide xanthan, since it catalyzes the fourth glycosylation step in the assembly of the pentasaccharide-P-P-polyisoprenyl repeating unit of xanthan. Is unable to use the trisaccharide acceptor freed from the pyrophosphate lipid moiety. Does not show specificity for the lipidic portion of the acceptor. Shows diminished activity when tested with 6-O-acetyl-mannose-alpha-1,3-glucose-beta-1,4-glucose-P-P-polyisoprenyl, a putative intermediate in the synthesis of xanthan; this could indicate that acetylation of the internal mannose takes place after the formation of the GumK product. This chain is UDP-glucuronate:glycolipid 2-beta-glucuronosyltransferase (gumK), found in Xanthomonas campestris pv. campestris.